We begin with the raw amino-acid sequence, 103 residues long: Cytochrome c55X (103 aa).

An N-terminal signal peptide occupies residues 1 to 17 (MARLALLLVLLAGTAVA). Residues Cys-36, Cys-39, and His-40 each coordinate heme c.

Binds 1 heme c group covalently per subunit.

Its subcellular location is the periplasm. In terms of biological role, monoheme c-type cytochrome. This is Cytochrome c55X (nirC) from Paracoccus denitrificans (strain Pd 1222).